The sequence spans 427 residues: MENGYKTYRDKVIEYLEAHEKWRSSTINLIASENVTSPSVNRAVSSGFMHKYAEGWPRQRYYQGCKYVDEVELIGVDLFCKLFGSDFADLRPISGTNANQAVFFGLTQPGDKAIVLHTSHGGHISHMPFGAAGMRGLEVHTWPFDNEEFNIDVDKAAQLIRELEPRIVVFGGSLFPFPHPVKELAPVAKEVGAYVMYDAAHVLGLIAGKQFQNPLREGVDIMTASTHKTFPGPQGGIILYKNFGDDVAKLQWAIFPGVLSNHHLHHMAGKVITAAEMLEFGERYAAQIVKNAKALAEALAEEGFKVIGEDKDYTESHQVIVDVSDLHEAAGGWAAPLLEEAGIILNKNLLPWDPLEKVNTPSGLRIGVQEMTRVGMLEDNMKDIAVFMRRVLIDKEDPKKVEKEVAEYRKEYQKVYYSFDHGLPMKE.

A (6S)-5,6,7,8-tetrahydrofolate-binding site is contributed by 122–124 (GHI). The residue at position 228 (K228) is an N6-(pyridoxal phosphate)lysine.

The protein belongs to the SHMT family. As to quaternary structure, homodimer. Requires pyridoxal 5'-phosphate as cofactor.

The protein localises to the cytoplasm. Its pathway is amino-acid biosynthesis; glycine biosynthesis; glycine from L-serine: step 1/1. In terms of biological role, catalyzes the reversible interconversion of serine and glycine with a modified folate serving as the one-carbon carrier. Also exhibits a pteridine-independent aldolase activity toward beta-hydroxyamino acids, producing glycine and aldehydes, via a retro-aldol mechanism. This chain is Serine hydroxymethyltransferase, found in Thermococcus onnurineus (strain NA1).